Consider the following 452-residue polypeptide: MASRINTNFTLIPNQKLRRSNRQTSCYSKTLGSGFQPISTFGNFKALPLEIFQIILKYLSVKDISMLSMVSKTVSQHIINYISTSSGSKRLLLQDFHNLELPDRRQDSAILEHYRSLGLLFKRCTLLLPTKERLKYIHKILTEVSCFKFNGCAAPMQCLGLTCYGMFLQTLTAGWDELECHRVYNFLCELTNLCRKIQMAVCSKPGSAQKLELRIRLFCRNVLLDHWTHRSDSAFWLTRILKPWPMVNQARLLYIIFGPISPQDGQVVWQEMIEEPTDEFSLKGLADAIKLLYDASTKEWTADDVISLVDELSVVPREWLLENNARLLMLSGNNICFSFMASKAVNGRTIELARLVVFLALVCEKELYCMDWTVKMMQKVCKVFSTPVERKNFLQNVANAFACVIMEMLQSIMSGDRDEDDRSFLNLFHLVHAQANFHKEVLYLTMNTPLST.

One can recognise an F-box domain in the interval 41–91 (FGNFKALPLEIFQIILKYLSVKDISMLSMVSKTVSQHIINYISTSSGSKRL).

As to quaternary structure, part of a SCF (SKP1-cullin-F-box) protein ligase complex. Widely expressed, with highest levels in kidney, liver and pancreas. Down-regulated in tumors.

Probably recognizes and binds to some phosphorylated proteins and promotes their ubiquitination and degradation. The chain is F-box only protein 47 from Homo sapiens (Human).